A 380-amino-acid polypeptide reads, in one-letter code: Cytochrome b (380 aa).

4 helical membrane passes run 34–54 (FGSL…FLAM), 78–99 (WLLR…YMHI), 114–134 (WNIG…GYVL), and 179–199 (FFAF…VHLL). Heme b-binding residues include His-84 and His-98. Heme b-binding residues include His-183 and His-197. His-202 is a binding site for a ubiquinone. 4 helical membrane-spanning segments follow: residues 227–247 (YKDV…ALFS), 289–309 (LGGV…PFVH), 321–341 (LAQV…WLGG), and 348–368 (YIFL…LFIP).

Belongs to the cytochrome b family. The cytochrome bc1 complex contains 3 respiratory subunits (MT-CYB, CYC1 and UQCRFS1), 2 core proteins (UQCRC1 and UQCRC2) and probably 6 low-molecular weight proteins. Heme b is required as a cofactor.

Its subcellular location is the mitochondrion inner membrane. In terms of biological role, component of the ubiquinol-cytochrome c reductase complex (complex III or cytochrome b-c1 complex) that is part of the mitochondrial respiratory chain. The b-c1 complex mediates electron transfer from ubiquinol to cytochrome c. Contributes to the generation of a proton gradient across the mitochondrial membrane that is then used for ATP synthesis. This Branchiostoma lanceolatum (Common lancelet) protein is Cytochrome b (MT-CYB).